The primary structure comprises 861 residues: ToMV susceptible protein tm-2 (861 aa).

A coiled-coil region spans residues 63 to 83 (VKNLLKDIQELAGDVEDLLDD). The NB-ARC domain maps to 162 to 388 (DDFNMLQAKL…LESMGHKVQD (227 aa)). Residue 185–192 (GMPGLGKT) coordinates ATP. LRR repeat units follow at residues 225–248 (LDIAKQIGLTEQKIKENLEDNLRS), 305–327 (LHALQPLESEKSFELFTKKIFNF), 388–411 (DGCAKVLALSYNDLPIASRPCFLY), 449–472 (LAEDVLNDLVSRNLIQLAKRTYNG), 510–536 (VARLRRITFYSDNVMIEFFGSNPKLEK), 585–608 (MTCLRYLKLEGNICGKLPNSIVKL), 609–631 (TRLETIDIDRRSLIQLPSGVWES), 652–680 (ISSFYPNIYSLHPNNLQTLMWIPDKFFEP), 689–713 (LRKLGILGVSNSTVKILSTCRPVPK), 735–758 (YPKIVKLHLNVDRTIALNSEAFPP), 781–804 (LPKLRKLKMVICKYNEEKMALSGE), and 810–835 (FPQLEVLHIHSPNGLSEVTCTDDVSM).

This sequence belongs to the disease resistance NB-LRR family. As to quaternary structure, (Microbial infection) Fails to interact with the tobamovirus mouvement protein of tobacco mosaic virus (TMV).

The protein resides in the cell membrane. Functionally, potential inhibitor of viral mouvements which may confer resistance to some tobamoviruses but not to the tomato mosaic virus (ToMV) and tobacco mosaic virus (TMV). The polypeptide is ToMV susceptible protein tm-2 (Solanum lycopersicum (Tomato)).